The sequence spans 318 residues: Ankyrin repeat and SOCS box protein 7 (318 aa).

ANK repeat units lie at residues 13–42 (QEESQIQAAVAAGDVHTVRKMLEQGYSPNG), 46–75 (NGWTLLHFSAARGKERCVRVFLEHGADPTV), 80–109 (GGFTALHYAAMHGRARIARLMLESEYRSDI), 116–145 (DGWTPLHVAAHYGRDSFVRLLLEFKAEVDP), 149–178 (KGTTPLQLAIIRERSSCVKILLDHNANIDI), 180–208 (NGFLLRYAVIKSNHSYCRMFLQRGADTNL), and 213–242 (DGQTPLHLSALRDDVLCARMLYNYGADTNT). The region spanning 265-318 (LDFLQEVTRQPRNLQDLCRIKIRQCIGLQNLKLLDELPIAKVMKDYLKHKSDDI) is the SOCS box domain.

The protein belongs to the ankyrin SOCS box (ASB) family. In terms of assembly, interacts with CUL5. Interacts with RNF7. Interacts with PSRC1.

It functions in the pathway protein modification; protein ubiquitination. Its function is as follows. Probable substrate-recognition component of a SCF-like ECS (Elongin-Cullin-SOCS-box protein) E3 ubiquitin-protein ligase complex which mediates the ubiquitination and subsequent proteasomal degradation of target proteins. Plays a role in spindle dynamics and genome integrity by targeting the mitotic progression protein PSRC1 for proteasomal degradation in a cell cycle-dependent manner. Also participates in meiosis by mediating the proper attachment between kinetochores and microtubules. In Pongo abelii (Sumatran orangutan), this protein is Ankyrin repeat and SOCS box protein 7 (ASB7).